The chain runs to 162 residues: Corticoliberin-2 (162 aa).

Residues 1-24 (MRLNFLVTTMALLVAFPPPYECRA) form the signal peptide. A propeptide spanning residues 25–119 (IDSSSNQPVT…ALDSEERERR (95 aa)) is cleaved from the precursor. The segment at 57–79 (LGNRNKNSPRSPPDTYPEASQYS) is disordered. Phe160 carries the post-translational modification Phenylalanine amide.

The protein belongs to the sauvagine/corticotropin-releasing factor/urotensin I family.

It is found in the secreted. This hormone from hypothalamus regulates the release of corticotropin from pituitary gland. The chain is Corticoliberin-2 (crf2) from Catostomus commersonii (White sucker).